A 238-amino-acid polypeptide reads, in one-letter code: Lipid transferase CIDEC (238 aa).

Positions 1-35 are required for liquid-liquid phase separation (LLPS); that stretch reads MDYAMKSLSLLYPRSLSRHVAVSTAVVTQQLVSEP. The CIDE-N domain maps to 41–118; that stretch reads RARPCRVSTA…VLQKGQKWKS (78 aa).

The protein belongs to the CIDE family. As to quaternary structure, homodimer. Interacts with CIDEA. Homooligomer; undergoes liquid-liquid phase separation (LLPS) via its N-terminus, facilitating lipid droplet fusion, occurs at the lipid droplet contact sites. Interacts with PLIN1. Interacts with NFAT5; this interaction is direct and retains NFAT5 in the cytoplasm. Interacts with CEBPB. Interacts with isoform CLSTN3beta of CLSTN3; inhibiting the lipid transferase activity of CIDEC. Ubiquitinated and targeted to proteasomal degradation, resulting in a short half-life (about 15 minutes in 3T3-L1 cells). Protein stability depends on triaclyglycerol synthesis, fatty acid availability and lipid droplet formation.

Its subcellular location is the lipid droplet. The protein resides in the endoplasmic reticulum. It is found in the nucleus. The enzyme catalyses a triacyl-sn-glycerol(in) = a triacyl-sn-glycerol(out). Functionally, lipid transferase specifically expressed in white adipose tissue, which promotes unilocular lipid droplet formation by mediating lipid droplet fusion. Lipid droplet fusion promotes their enlargement, restricting lipolysis and favoring lipid storage. Localizes on the lipid droplet surface, at focal contact sites between lipid droplets, and mediates atypical lipid droplet fusion by undergoing liquid-liquid phase separation (LLPS) and promoting directional net neutral lipid transfer from the smaller to larger lipid droplets. The transfer direction may be driven by the internal pressure difference between the contacting lipid droplet pair. Its role in neutral lipid transfer and lipid droplet enlargement is activated by the interaction with PLIN1. May also act as a CEBPB coactivator in the white adipose tissue to control the expression of a subset of CEBPB downstream target genes, including SOCS1, SOCS3, TGFB1, TGFBR1, ID2 and XDH. When overexpressed in preadipocytes, induces apoptosis or increases cell susceptibility to apoptosis induced by serum deprivation or TGFB treatment. The sequence is that of Lipid transferase CIDEC from Rattus norvegicus (Rat).